The following is a 191-amino-acid chain: Phosphoheptose isomerase (191 aa).

The SIS domain occupies 34 to 191; the sequence is IATALKDGNK…LVEEMVCERS (158 aa). Substrate is bound at residue 49-51; the sequence is NGG. Zn(2+) contacts are provided by His-58 and Glu-62. Residues Glu-62, 91–92, 117–119, Ser-122, and Gln-169 each bind substrate; these read ND and TTS. The Zn(2+) site is built by Gln-169 and His-177.

The protein belongs to the SIS family. GmhA subfamily. It depends on Zn(2+) as a cofactor.

It is found in the cytoplasm. It carries out the reaction 2 D-sedoheptulose 7-phosphate = D-glycero-alpha-D-manno-heptose 7-phosphate + D-glycero-beta-D-manno-heptose 7-phosphate. It participates in carbohydrate biosynthesis; D-glycero-D-manno-heptose 7-phosphate biosynthesis; D-glycero-alpha-D-manno-heptose 7-phosphate and D-glycero-beta-D-manno-heptose 7-phosphate from sedoheptulose 7-phosphate: step 1/1. In terms of biological role, catalyzes the isomerization of sedoheptulose 7-phosphate in D-glycero-D-manno-heptose 7-phosphate. In Aquifex aeolicus (strain VF5), this protein is Phosphoheptose isomerase.